The following is a 537-amino-acid chain: ATP synthase subunit alpha (537 aa).

174 to 181 (GDRQTGKT) serves as a coordination point for ATP.

Belongs to the ATPase alpha/beta chains family. As to quaternary structure, F-type ATPases have 2 components, CF(1) - the catalytic core - and CF(0) - the membrane proton channel. CF(1) has five subunits: alpha(3), beta(3), gamma(1), delta(1), epsilon(1). CF(0) has three main subunits: a(1), b(2) and c(9-12). The alpha and beta chains form an alternating ring which encloses part of the gamma chain. CF(1) is attached to CF(0) by a central stalk formed by the gamma and epsilon chains, while a peripheral stalk is formed by the delta and b chains.

The protein resides in the cell inner membrane. It carries out the reaction ATP + H2O + 4 H(+)(in) = ADP + phosphate + 5 H(+)(out). Produces ATP from ADP in the presence of a proton gradient across the membrane. The alpha chain is a regulatory subunit. This Verminephrobacter eiseniae (strain EF01-2) protein is ATP synthase subunit alpha.